A 668-amino-acid chain; its full sequence is MFQDNPLLAQLKQQIQENLPKKEGSIKATDKGFGFLEVDSKTSFFIPPAYMKKCIHGDKVVAIIRTENEREVAEPQELIEQSLTRFIGRVKMFKGKLNVVPDHPQLKKLSLKAKLKKGLKPDNFAEGDWVVAHLVRHPLKGDNTFFVEISEKITDADDKIAPWWVTLAQNDLPNSEPAGIENWELKDDADLERIEMTHVPFVTIDGESTKDMDDALYAKKTESGDFELTIAIADPTAYITPEDEMDKVARERGYTIYLPGRNIPMLPRDLADNLCSLIEGEIRPAICCTVTVSKDGVIGDDIKFFAANIKSHARLAYDHVSDWLENGNSDAWQPSEEIATIVRDLYEFSLARAEWREKNAVVFPDRPDYRFELSEDNDVIAIHADMRRSANRLVEESMITANICAGRTLREKFETGVFNTHAGLKPEKIEEVVQLVNPEGTLEFTAESIATLEGFAALRRWLAVQETSYLDNRIRKFQAYSEVGNQPLPHYAMGLDIYATWTSPIRKYGDMINHRMLKAVILDKEPVQKPDDQVGEELALHRKHHKIAERNVSDWLYARTLADEPSKQTCFTGEIFDINRAGARVRLLENGAAAFIPGALILDNKERIECNGDNGTISIDKEVVYKLGDTLEIVLADVNQENRSLVAKPTQVFADQPAPQTEQTVSEE.

One can recognise an RNB domain in the interval 193–521 (RIEMTHVPFV…INHRMLKAVI (329 aa)). The S1 motif domain maps to 568–650 (QTCFTGEIFD…ENRSLVAKPT (83 aa)).

This sequence belongs to the RNR ribonuclease family. RNase II subfamily.

The protein localises to the cytoplasm. It catalyses the reaction Exonucleolytic cleavage in the 3'- to 5'-direction to yield nucleoside 5'-phosphates.. Functionally, involved in mRNA degradation. Hydrolyzes single-stranded polyribonucleotides processively in the 3' to 5' direction. This is Exoribonuclease 2 from Vibrio parahaemolyticus serotype O3:K6 (strain RIMD 2210633).